A 513-amino-acid polypeptide reads, in one-letter code: MNLLDPFMKMTDEQEKGLSGAPSPTMSEDSAGSPCPSGSGSDTENTRPQENTFPKGEPDLKKESEEDKFPVCIREAVSQVLKGYDWTLVPMPVRVNGSSKNKPHVKRPMNAFMVWAQAARRKLADQYPHLHNAELSKTLGKLWRLLNESEKRPFVEEAERLRVQHKKDHPDYKYQPRRRKSVKNGQAEAEEATEQTHISPNAIFKRLQADSPHSSSGMNEVHSPGKHSGQSQGPPTPPTTPKTDVQPGKADLKREGRPLPEGGRQPPIDFRDVDIGELSSDVISNIETFDVNEFDQYLPPNGHPGVPATHGQVTYTGSYGISSTAATPAGAGHVWMSKQQAPPPPPPPPQQSPQAPPQPPQAPPQAPQAPPQPQPAPPQPQAAHTLTPLSSEPGQAQRTHIKTEQLSPSHYSEQQQHSPQQIAYSPFSLPHYSPSYPPITRSQYDYTDHQNSGSYYSHAAGQGSSLYSTFTYMNPAQRPMYTPIADTSGVPSIPQTHSPQHWEQPVYTQLTRP.

Disordered stretches follow at residues 1–67 (MNLL…SEED) and 160–273 (RLRV…FRDV). Residues 30 to 41 (SAGSPCPSGSGS) are compositionally biased toward low complexity. The segment covering 42-52 (DTENTRPQENT) has biased composition (polar residues). Composition is skewed to basic and acidic residues over residues 56–67 (GEPDLKKESEED) and 160–174 (RLRV…DYKY). Residues 63–103 (ESEEDKFPVCIREAVSQVLKGYDWTLVPMPVRVNGSSKNKP) form a dimerization (DIM) region. Residues 63 to 103 (ESEEDKFPVCIREAVSQVLKGYDWTLVPMPVRVNGSSKNKP) form a PQA region. Position 64 is a phosphoserine (Ser64). The HMG box DNA-binding region spans 105–173 (VKRPMNAFMV…QHKKDHPDYK (69 aa)). At Ser211 the chain carries Phosphoserine. Residues 224 to 307 (PGKHSGQSQG…LPPNGHPGVP (84 aa)) are transactivation domain (TAM). 2 consecutive short sequence motifs (9aaTAD) follow at residues 275 to 284 (IGELSSDVIS) and 290 to 298 (DVNEFDQYL). Positions 334-447 (VWMSKQQAPP…PITRSQYDYT (114 aa)) are disordered. The span at 341–380 (APPPPPPPPQQSPQAPPQPPQAPPQAPQAPPQPQPAPPQP) shows a compositional bias: pro residues. Over residues 387–423 (TPLSSEPGQAQRTHIKTEQLSPSHYSEQQQHSPQQIA) the composition is skewed to polar residues. The segment at 398-513 (RTHIKTEQLS…QPVYTQLTRP (116 aa)) is transactivation domain (TAC). A Glycyl lysine isopeptide (Lys-Gly) (interchain with G-Cter in ubiquitin) cross-link involves residue Lys402. A 9aaTAD 3 motif is present at residues 464–472 (SSLYSTFTY). The interval 483 to 513 (PIADTSGVPSIPQTHSPQHWEQPVYTQLTRP) is disordered. Over residues 489–513 (GVPSIPQTHSPQHWEQPVYTQLTRP) the composition is skewed to polar residues.

Homodimer; homodimerization is required for activity. Interacts (via C-terminus) with ZNF219; forming a complex that binds to the COL2A1 promoter and activates COL2A1 expression. Interacts with DDRGK1. Interacts with EP300/p300. Interacts with beta-catenin (CTNNB1); inhibiting CTNNB1 activity by competing with the binding sites of TCF/LEF within CTNNB1. Post-translationally, acetylated; acetylation impairs nuclear localization and ability to transactivate expression of target genes. Deacetylated by SIRT1. Phosphorylation at Ser-64 and Ser-211 by PKA increases transcriptional activity and may help delay chondrocyte maturation downstream of PTHLH/PTHrP signaling. Phosphorylation at either Ser-64 or Ser-211 is required for sumoylation, but phosphorylation is not dependent on sumoylation. Phosphorylated on tyrosine residues; tyrosine dephosphorylation by PTPN11/SHP2 blocks SOX9 phosphorylation by PKA and subsequent SUMOylation. In terms of processing, sumoylated; phosphorylation at either Ser-64 or Ser-211 is required for sumoylation. Sumoylation is induced by BMP signaling pathway. Post-translationally, ubiquitinated; ubiquitination leads to proteasomal degradation and is negatively regulated by DDRGK1.

Its subcellular location is the nucleus. Transcription factor that plays a key role in chondrocytes differentiation and skeletal development. Specifically binds the 5'-ACAAAG-3' DNA motif present in enhancers and super-enhancers and promotes expression of genes important for chondrogenesis, including cartilage matrix protein-coding genes COL2A1, COL4A2, COL9A1, COL11A2 and ACAN, SOX5 and SOX6. Also binds to some promoter regions. Plays a central role in successive steps of chondrocyte differentiation. Absolutely required for precartilaginous condensation, the first step in chondrogenesis during which skeletal progenitors differentiate into prechondrocytes. Together with SOX5 and SOX6, required for overt chondrogenesis when condensed prechondrocytes differentiate into early stage chondrocytes, the second step in chondrogenesis. Later, required to direct hypertrophic maturation and block osteoblast differentiation of growth plate chondrocytes: maintains chondrocyte columnar proliferation, delays prehypertrophy and then prevents osteoblastic differentiation of chondrocytes by lowering beta-catenin (CTNNB1) signaling and RUNX2 expression. Also required for chondrocyte hypertrophy, both indirectly, by keeping the lineage fate of chondrocytes, and directly, by remaining present in upper hypertrophic cells and transactivating COL10A1 along with MEF2C. Low lipid levels are the main nutritional determinant for chondrogenic commitment of skeletal progenitor cells: when lipids levels are low, FOXO (FOXO1 and FOXO3) transcription factors promote expression of SOX9, which induces chondrogenic commitment and suppresses fatty acid oxidation. Mechanistically, helps, but is not required, to remove epigenetic signatures of transcriptional repression and deposit active promoter and enhancer marks at chondrocyte-specific genes. Acts in cooperation with the Hedgehog pathway-dependent GLI (GLI1 and GLI3) transcription factors. In addition to cartilage development, also acts as a regulator of proliferation and differentiation in epithelial stem/progenitor cells: involved in the lung epithelium during branching morphogenesis, by balancing proliferation and differentiation and regulating the extracellular matrix. Controls epithelial branching during kidney development. The protein is Transcription factor SOX-9 (SOX9) of Canis lupus familiaris (Dog).